Reading from the N-terminus, the 155-residue chain is Transcription antitermination protein NusB (155 aa).

It belongs to the NusB family.

Involved in transcription antitermination. Required for transcription of ribosomal RNA (rRNA) genes. Binds specifically to the boxA antiterminator sequence of the ribosomal RNA (rrn) operons. The protein is Transcription antitermination protein NusB of Ralstonia nicotianae (strain ATCC BAA-1114 / GMI1000) (Ralstonia solanacearum).